We begin with the raw amino-acid sequence, 352 residues long: Photosystem II D2 protein (352 aa).

Thr2 is subject to N-acetylthreonine. Phosphothreonine is present on Thr2. A helical transmembrane segment spans residues 40–60; it reads CAYFAVGGWLTGTTFVTSWYT. His117 lines the chlorophyll a pocket. A helical transmembrane segment spans residues 124 to 140; sequence GFMLRQFEIARAIGLRP. Pheophytin a-binding residues include Gln129 and Asn142. A helical transmembrane segment spans residues 152–165; it reads VFVSVFLIYPLGQS. Residue His197 coordinates chlorophyll a. Residues 207–227 form a helical membrane-spanning segment; it reads AALLCAIHGATVENTLFEDGD. A plastoquinone is bound by residues His214 and Phe261. His214 is a Fe cation binding site. His268 provides a ligand contact to Fe cation. Residues 278-294 traverse the membrane as a helical segment; it reads GLWMSAIGVVGLALNLR.

It belongs to the reaction center PufL/M/PsbA/D family. PSII is composed of 1 copy each of membrane proteins PsbA, PsbB, PsbC, PsbD, PsbE, PsbF, PsbH, PsbI, PsbJ, PsbK, PsbL, PsbM, PsbT, PsbX, PsbY, PsbZ, Psb30/Ycf12, at least 3 peripheral proteins of the oxygen-evolving complex and a large number of cofactors. It forms dimeric complexes. The D1/D2 heterodimer binds P680, chlorophylls that are the primary electron donor of PSII, and subsequent electron acceptors. It shares a non-heme iron and each subunit binds pheophytin, quinone, additional chlorophylls, carotenoids and lipids. There is also a Cl(-1) ion associated with D1 and D2, which is required for oxygen evolution. The PSII complex binds additional chlorophylls, carotenoids and specific lipids. serves as cofactor.

The protein localises to the plastid. The protein resides in the chloroplast thylakoid membrane. The catalysed reaction is 2 a plastoquinone + 4 hnu + 2 H2O = 2 a plastoquinol + O2. Functionally, photosystem II (PSII) is a light-driven water:plastoquinone oxidoreductase that uses light energy to abstract electrons from H(2)O, generating O(2) and a proton gradient subsequently used for ATP formation. It consists of a core antenna complex that captures photons, and an electron transfer chain that converts photonic excitation into a charge separation. The D1/D2 (PsbA/PsbD) reaction center heterodimer binds P680, the primary electron donor of PSII as well as several subsequent electron acceptors. D2 is needed for assembly of a stable PSII complex. The sequence is that of Photosystem II D2 protein from Nephroselmis olivacea (Green alga).